A 709-amino-acid polypeptide reads, in one-letter code: Methylmalonyl-CoA mutase (709 aa).

Residues 73 to 77 (TIRQY), 183 to 185 (TIQ), R195, K222, H232, and 271 to 273 (RLS) contribute to the substrate site. The region spanning 579 to 709 (RPRMLVVKMG…ILDLIREARS (131 aa)) is the B12-binding domain. An adenosylcob(III)alamin-binding site is contributed by H592.

Belongs to the methylmalonyl-CoA mutase family. In terms of assembly, homodimer. Adenosylcob(III)alamin is required as a cofactor.

It catalyses the reaction (R)-methylmalonyl-CoA = succinyl-CoA. It participates in metabolic intermediate metabolism; propanoyl-CoA degradation; succinyl-CoA from propanoyl-CoA: step 3/3. Functionally, radical enzyme that catalyzes the transformation of (2R)-methylmalonyl-CoA to succinyl-CoA. Is involved in the ethylmalonyl-CoA pathway for acetyl-CoA assimilation required for R.sphaeroides growth on acetate as sole carbon source. This Cereibacter sphaeroides (strain ATCC 17023 / DSM 158 / JCM 6121 / CCUG 31486 / LMG 2827 / NBRC 12203 / NCIMB 8253 / ATH 2.4.1.) (Rhodobacter sphaeroides) protein is Methylmalonyl-CoA mutase.